Reading from the N-terminus, the 142-residue chain is Hemoglobin subunit alpha-A (142 aa).

The 141-residue stretch at 2 to 142 (VLSAADKNNV…VGTVLTAKYR (141 aa)) folds into the Globin domain. An O2-binding site is contributed by H59. H88 contributes to the heme b binding site.

It belongs to the globin family. As to quaternary structure, heterotetramer of two alpha chains and two beta chains. As to expression, red blood cells.

Its function is as follows. Involved in oxygen transport from the lung to the various peripheral tissues. This is Hemoglobin subunit alpha-A (HBAA) from Meleagris gallopavo (Wild turkey).